The chain runs to 306 residues: Oxygen-dependent coproporphyrinogen-III oxidase (306 aa).

A substrate-binding site is contributed by Ser99. A divalent metal cation is bound by residues His103 and His113. His113 acts as the Proton donor in catalysis. 115–117 (NVR) serves as a coordination point for substrate. His152 and His182 together coordinate a divalent metal cation. The tract at residues 247 to 282 (YVEFNLVFDRGTLFGLQSGGRTESILMSMPPVANWR) is important for dimerization. 265–267 (GGR) lines the substrate pocket.

It belongs to the aerobic coproporphyrinogen-III oxidase family. As to quaternary structure, homodimer. A divalent metal cation is required as a cofactor.

It localises to the cytoplasm. The catalysed reaction is coproporphyrinogen III + O2 + 2 H(+) = protoporphyrinogen IX + 2 CO2 + 2 H2O. Its pathway is porphyrin-containing compound metabolism; protoporphyrin-IX biosynthesis; protoporphyrinogen-IX from coproporphyrinogen-III (O2 route): step 1/1. Functionally, involved in the heme biosynthesis. Catalyzes the aerobic oxidative decarboxylation of propionate groups of rings A and B of coproporphyrinogen-III to yield the vinyl groups in protoporphyrinogen-IX. In Burkholderia ambifaria (strain MC40-6), this protein is Oxygen-dependent coproporphyrinogen-III oxidase.